The sequence spans 246 residues: UDP-N-acetyl-D-mannosaminuronic acid transferase (246 aa).

Belongs to the glycosyltransferase 26 family.

The enzyme catalyses UDP-N-acetyl-alpha-D-mannosaminouronate + N-acetyl-alpha-D-glucosaminyl-di-trans,octa-cis-undecaprenyl diphosphate = beta-D-ManNAcA-(1-&gt;4)-alpha-D-GlcNAc-di-trans,octa-cis-undecaprenyl diphosphate + UDP + H(+). Its pathway is bacterial outer membrane biogenesis; enterobacterial common antigen biosynthesis. Its function is as follows. Catalyzes the synthesis of Und-PP-GlcNAc-ManNAcA (Lipid II), the second lipid-linked intermediate involved in enterobacterial common antigen (ECA) synthesis. The polypeptide is UDP-N-acetyl-D-mannosaminuronic acid transferase (Escherichia coli O6:K15:H31 (strain 536 / UPEC)).